The chain runs to 274 residues: CDC48-associated ubiquitin-like/zinc finger protein 1 (274 aa).

An AN1-type zinc finger spans residues 12 to 58 (LDVGKHCAYCRQLDFLPFHCSFCNEDFCSNHRLKEDHHCRWLLEHEE). Zn(2+) is bound by residues C18, C21, C31, C34, C39, H42, H48, and C50. The tract at residues 170 to 266 (NRIYIWCYLV…KDLDTLYLVH (97 aa)) is ubiquitin-like. At S273 the chain carries Phosphoserine.

In terms of assembly, interacts (via its ubiquitin-like domain) with CDC48 (via N-terminus). Associates with the 26S proteasome. Specifically interacts with the regulatory particle (RP) subunit RPN2. Exposure to arsenite, a known inducer of protein misfolding resulting in accumulation of polyubiquitinated conjugates, enhances the association with the proteoasome. Binds to ubiquitinated proteins conjugated to a 4 or more molecule ubiquitin chain. Binding to ubiquitinated proteins is zinc-dependent.

It is found in the cytoplasm. The protein resides in the nucleus. Promotes efficient arsenite-induced clearance of stress granules (SGs). May have a role in the ubiquitin-proteasome system (UPS) protecting cells from metalloid-induced proteotoxicity. The chain is CDC48-associated ubiquitin-like/zinc finger protein 1 from Saccharomyces cerevisiae (strain ATCC 204508 / S288c) (Baker's yeast).